A 449-amino-acid chain; its full sequence is Glucose-6-phosphate isomerase 1 (449 aa).

T38 is modified (phosphothreonine). E290 (proton donor) is an active-site residue. Active-site residues include H311 and K425.

Belongs to the GPI family. As to quaternary structure, homodimer.

It is found in the cytoplasm. It catalyses the reaction alpha-D-glucose 6-phosphate = beta-D-fructose 6-phosphate. It functions in the pathway carbohydrate biosynthesis; gluconeogenesis. The protein operates within carbohydrate degradation; glycolysis; D-glyceraldehyde 3-phosphate and glycerone phosphate from D-glucose: step 2/4. Functionally, catalyzes the reversible isomerization of glucose-6-phosphate to fructose-6-phosphate. The polypeptide is Glucose-6-phosphate isomerase 1 (Geobacillus stearothermophilus (Bacillus stearothermophilus)).